We begin with the raw amino-acid sequence, 359 residues long: Histidinol-phosphate aminotransferase (359 aa).

K217 is modified (N6-(pyridoxal phosphate)lysine).

It belongs to the class-II pyridoxal-phosphate-dependent aminotransferase family. Histidinol-phosphate aminotransferase subfamily. In terms of assembly, homodimer. Pyridoxal 5'-phosphate is required as a cofactor.

It catalyses the reaction L-histidinol phosphate + 2-oxoglutarate = 3-(imidazol-4-yl)-2-oxopropyl phosphate + L-glutamate. Its pathway is amino-acid biosynthesis; L-histidine biosynthesis; L-histidine from 5-phospho-alpha-D-ribose 1-diphosphate: step 7/9. The chain is Histidinol-phosphate aminotransferase (hisC) from Salmonella typhimurium (strain LT2 / SGSC1412 / ATCC 700720).